Here is a 211-residue protein sequence, read N- to C-terminus: Adenylyl-sulfate kinase (211 aa).

36-43 contributes to the ATP binding site; sequence GLSGSGKS. The active-site Phosphoserine intermediate is the Ser-110.

It belongs to the APS kinase family.

It catalyses the reaction adenosine 5'-phosphosulfate + ATP = 3'-phosphoadenylyl sulfate + ADP + H(+). It functions in the pathway sulfur metabolism; hydrogen sulfide biosynthesis; sulfite from sulfate: step 2/3. Functionally, catalyzes the synthesis of activated sulfate. This chain is Adenylyl-sulfate kinase (cysC), found in Buchnera aphidicola subsp. Schizaphis graminum (strain Sg).